The chain runs to 511 residues: Bifunctional purine biosynthesis protein PurH (511 aa).

Positions 1-145 (MKKRALVSVS…KNHKFVSVIV (145 aa)) constitute an MGS-like domain.

Belongs to the PurH family.

It catalyses the reaction (6R)-10-formyltetrahydrofolate + 5-amino-1-(5-phospho-beta-D-ribosyl)imidazole-4-carboxamide = 5-formamido-1-(5-phospho-D-ribosyl)imidazole-4-carboxamide + (6S)-5,6,7,8-tetrahydrofolate. The enzyme catalyses IMP + H2O = 5-formamido-1-(5-phospho-D-ribosyl)imidazole-4-carboxamide. The protein operates within purine metabolism; IMP biosynthesis via de novo pathway; 5-formamido-1-(5-phospho-D-ribosyl)imidazole-4-carboxamide from 5-amino-1-(5-phospho-D-ribosyl)imidazole-4-carboxamide (10-formyl THF route): step 1/1. Its pathway is purine metabolism; IMP biosynthesis via de novo pathway; IMP from 5-formamido-1-(5-phospho-D-ribosyl)imidazole-4-carboxamide: step 1/1. This Bacillus thuringiensis (strain Al Hakam) protein is Bifunctional purine biosynthesis protein PurH.